Reading from the N-terminus, the 129-residue chain is MAKVYATGRRKTSIAKVWLESGNGQLTINGQTLDAWLGGHESIKKRVMQPLNVAKQETSVNIIVKTLGGGYSAQADAARHGISRALVAFDEQFRTILKPYGLLTRDSRSVERKKFGKKKARKSSQFSKR.

The protein belongs to the universal ribosomal protein uS9 family.

The polypeptide is Small ribosomal subunit protein uS9 (Aliarcobacter butzleri (strain RM4018) (Arcobacter butzleri)).